Consider the following 124-residue polypeptide: Fluoride-specific ion channel FluC (124 aa).

Transmembrane regions (helical) follow at residues Leu5 to Phe25, Phe32 to Gly52, Leu61 to Val81, and Leu94 to Val114. 2 residues coordinate Na(+): Gly69 and Thr72.

The protein belongs to the fluoride channel Fluc/FEX (TC 1.A.43) family.

It localises to the cell inner membrane. It carries out the reaction fluoride(in) = fluoride(out). With respect to regulation, na(+) is not transported, but it plays an essential structural role and its presence is essential for fluoride channel function. Functionally, fluoride-specific ion channel. Important for reducing fluoride concentration in the cell, thus reducing its toxicity. The protein is Fluoride-specific ion channel FluC of Haemophilus ducreyi (strain 35000HP / ATCC 700724).